Consider the following 178-residue polypeptide: MDHAEQGPDRPGVDDPGRGRRIGIDVGSVRIGVASSDPDGILATPVETVPRSKERGPDAPDIRRIADIVEEYEAVEVIVGLPQTLRGERGKAASIATVFAKRLRRKVDPIPVRMADERLTTVTAARALRESGVSARGQRPVIDQAAAVAILQGWLDERSRSVNAGDSGGDAQLPEGGQ.

The span at 1-18 (MDHAEQGPDRPGVDDPGR) shows a compositional bias: basic and acidic residues. Residues 1–21 (MDHAEQGPDRPGVDDPGRGRR) form a disordered region.

It belongs to the YqgF nuclease family.

The protein localises to the cytoplasm. Functionally, could be a nuclease involved in processing of the 5'-end of pre-16S rRNA. The chain is Putative pre-16S rRNA nuclease from Rhodococcus jostii (strain RHA1).